Consider the following 233-residue polypeptide: Ribonuclease HII (233 aa).

One can recognise an RNase H type-2 domain in the interval 26–215 (QLVAGIDEVG…VRASEGEGLE (190 aa)). A divalent metal cation-binding residues include Asp-32, Glu-33, and Asp-124. The segment at 211 to 233 (GEGLETAAGRQSSEGKKGRRPRG) is disordered.

Belongs to the RNase HII family. Requires Mn(2+) as cofactor. The cofactor is Mg(2+).

The protein localises to the cytoplasm. The catalysed reaction is Endonucleolytic cleavage to 5'-phosphomonoester.. Functionally, endonuclease that specifically degrades the RNA of RNA-DNA hybrids. The chain is Ribonuclease HII from Syntrophobacter fumaroxidans (strain DSM 10017 / MPOB).